We begin with the raw amino-acid sequence, 2513 residues long: Polyprotein P1234 (2513 aa).

The 231-residue stretch at 30-260 (VAQQVTPNDH…EHRASLQSWH (231 aa)) folds into the Alphavirus-like MT domain. Residues 245–264 (GSTLYPEHRASLQSWHLPSV) are nsP1 membrane-binding. Cys-420 carries the S-palmitoyl cysteine; by host lipid modification. Residues 695-850 (ELTNPPYHEL…KDICTKTFYK (156 aa)) form the (+)RNA virus helicase ATP-binding domain. 726–733 (GTPGSGKS) is an a ribonucleoside 5'-triphosphate binding site. Positions 851-999 (YISRRCTQPV…IEDWEAEHKG (149 aa)) constitute a (+)RNA virus helicase C-terminal domain. The Peptidase C9 domain maps to 1012–1341 (NPFSCKTNVC…CVISSVYEGT (330 aa)). The segment at 1013–1032 (PFSCKTNVCWAKALEPILAT) is nucleolus localization signal. Cys-1021 acts as the For cysteine protease nsP2 activity in catalysis. The Nuclear export signal signature appears at 1066-1075 (IKFFGMDLTS). The active-site For cysteine protease nsP2 activity is His-1098. The short motif at 1196-1200 (PRKRI) is the Nuclear localization signal element. The Macro domain maps to 1348–1507 (APSYRTKREN…RIDAALQLKE (160 aa)). ADP-D-ribose is bound by residues Asn-1371, Gly-1379, Gly-1459, Ile-1460, and Tyr-1461. Zn(2+) contacts are provided by Cys-1610, Cys-1612, Cys-1635, and Cys-1653. The segment covering 1679–1696 (PTAPPAQAEEAPEVVATP) has biased composition (low complexity). A disordered region spans residues 1679–1705 (PTAPPAQAEEAPEVVATPSPSTADNTS). 2 consecutive short sequence motifs (FGDF; binding to host G3BP1) follow at residues 1837 to 1840 (FGSF) and 1860 to 1863 (FGSF). One can recognise a RdRp catalytic domain in the interval 2267-2382 (DPVLETDIAS…HGVVSDKEMA (116 aa)).

Interacts with non-structural protein 3. Interacts with RNA-directed RNA polymerase nsP4. Interacts with protease nsP2. interacts with itself. Interacts with host TMEM45B; this interaction leads to viral replication inhibition. As to quaternary structure, interacts with mRNA-capping enzyme nsP1. Interacts with host DDX1. Interacts with host DDX3. Interacts (via C-terminus) with host G3BP1; this interaction inhibits the formation of host stress granules on viral mRNAs and the nsp3-G3BP1 complexes bind viral RNAs and probably orchestrate the assembly of viral replication complexes. Interacts (via C-terminus) with host G3BP2; this interaction inhibits the formation of host stress granules on viral mRNAs and the nsp3-G3BP2 complexes bind viral RNAs and probably orchestrate the assembly of viral replication complexes. In terms of assembly, interacts with mRNA-capping enzyme nsP1. Interacts with protease nsP2. interacts with itself. Interacts with host TMEM45B; this interaction leads to viral replication inhibition. Interacts with RNA-directed RNA polymerase nsP4. Interacts with mRNA-capping enzyme nsP1. Interacts with KPNA1/karyopherin-alpha1; this interaction probably allows the active transport of protease nsP2 into the host nucleus. It depends on Mg(2+) as a cofactor. Mn(2+) is required as a cofactor. In terms of processing, specific enzymatic cleavages in vivo yield mature proteins. The processing of the polyprotein is temporally regulated. In early stages (1.7 hpi), P1234 is first cleaved in trans through its nsP2 protease activity, releasing P123' and nsP4, which associate to form the early replication complex. At the same time, P1234 is also cut at the nsP1/nsP2 site early in infection but with lower efficiency. After replication of the viral minus-strand RNAs (4 hpi), the polyproteins are cut at the nsP1/nsP2 and nsP2/nsP3 sites very efficiently, preventing accumulation of P123' and P1234 and allowing the formation of the late replication complex. NsP3'/nsP4 site is not cleaved anymore and P34 is produced rather than nsP4. Post-translationally, specific enzymatic cleavages in vivo yield mature proteins. The processing of the polyprotein is temporally regulated. In early stages (1.7 hpi), P123 is cleaved at the nsP1/nsP2 site with low efficiency. After replication of the viral minus-strand RNAs (4 hpi), the polyproteins are cut at the nsP1/nsP2 and nsP2/nsP3 sites very efficiently, preventing accumulation of P123 and allowing the formation of the late replication complex. Specific enzymatic cleavages in vivo yield mature proteins. The processing of the polyprotein is temporally regulated. In early stages (1.7 hpi), P123' is cleaved at the nsP1/nsP2 site with low efficiency. After replication of the viral minus-strand RNAs (4 hpi), the polyproteins are cut at the nsP1/nsP2 and nsP2/nsP3 sites very efficiently, preventing accumulation of P123' and allowing the formation of the late replication complex. In terms of processing, palmitoylated by host palmitoyltransferases ZDHHC2 and ZDHHC19. Post-translationally, phosphorylated by host on serines and threonines. Ubiquitinated; targets the protein for rapid degradation via the ubiquitin system. Nsp4 is present in extremely low quantities due to low frequency of translation through the amber stop-codon and the degradation by the ubiquitin pathway.

Its subcellular location is the host cytoplasmic vesicle membrane. The protein resides in the host cell membrane. It is found in the host cell projection. It localises to the host filopodium. The protein localises to the host nucleus. Its subcellular location is the host cytoplasm. The enzyme catalyses GTP + S-adenosyl-L-methionine = N(7)-methyl-GTP + S-adenosyl-L-homocysteine. The catalysed reaction is N(7)-methyl-GTP + L-histidyl-[protein] = N(tele)-(N(7)-methylguanosine 5'-phospho)-L-histidyl-[protein] + diphosphate. It catalyses the reaction N(tele)-(N(7)-methylguanosine 5'-phospho)-L-histidyl-[protein] + a 5'-end diphospho-(purine-ribonucleoside) in mRNA + H(+) = a 5'-end (N(7)-methyl 5'-triphosphoguanosine)-(purine-ribonucleoside) in mRNA + L-histidyl-[protein]. It carries out the reaction a 5'-end triphospho-ribonucleoside in mRNA + H2O = a 5'-end diphospho-ribonucleoside in mRNA + phosphate + H(+). The enzyme catalyses a ribonucleoside 5'-triphosphate + H2O = a ribonucleoside 5'-diphosphate + phosphate + H(+). The catalysed reaction is ATP + H2O = ADP + phosphate + H(+). It catalyses the reaction RNA(n) + a ribonucleoside 5'-triphosphate = RNA(n+1) + diphosphate. It carries out the reaction RNA(n) + ATP = RNA(n)-3'-adenine ribonucleotide + diphosphate. The enzyme catalyses 4-O-(ADP-D-ribosyl)-L-aspartyl-[protein] + H2O = L-aspartyl-[protein] + ADP-D-ribose + H(+). The catalysed reaction is 5-O-(ADP-D-ribosyl)-L-glutamyl-[protein] + H2O = L-glutamyl-[protein] + ADP-D-ribose + H(+). It catalyses the reaction ADP-alpha-D-ribose 1''-phosphate + H2O = ADP-D-ribose + phosphate. Inactive precursor of the viral replicase, which is activated by cleavages carried out by the viral protease nsP2. Functionally, the early replication complex formed by the polyprotein P123 and nsP4 synthesizes minus-strand RNAs. Polyprotein P123 is a short-lived polyprotein that accumulates during early stage of infection. As soon P123 is cleaved into mature proteins, the plus-strand RNAs synthesis begins. Its function is as follows. The early replication complex formed by the polyprotein P123' and nsP4 synthesizes minus-strand RNAs. Polyprotein P123' is a short-lived polyprotein that accumulates during early stage of infection. As soon P123' is cleaved into mature proteins, the plus-strand RNAs synthesis begins. In terms of biological role, cytoplasmic capping enzyme that catalyzes two virus-specific reactions: methyltransferase and nsP1 guanylyltransferase. mRNA-capping is necessary since all viral RNAs are synthesized in the cytoplasm, and host capping enzymes are restricted to the nucleus. The enzymatic reaction involves a covalent link between 7-methyl-GMP and nsP1, whereas eukaryotic capping enzymes form a covalent complex only with GMP. nsP1 capping consists in the following reactions: GTP is first methylated into 7-methyl-GMP and then is covalently linked to nsP1 to form the m7GMp-nsP1 complex from which 7-methyl-GMP complex is transferred to the mRNA to create the cap structure. NsP1 is needed for the initiation of the minus-strand RNAs synthesis. Probably serves as a membrane anchor for the replication complex composed of nsP1-nsP4. Palmitoylated nsP1 is remodeling host cell cytoskeleton, and induces filopodium-like structure formation at the surface of the host cell. Multifunctional protein whose N-terminus is part of the RNA polymerase complex and displays NTPase, RNA triphosphatase and helicase activities. NTPase and RNA triphosphatase are involved in viral RNA capping and helicase keeps a check on the dsRNA replication intermediates. The C-terminus harbors a protease that specifically cleaves the polyproteins and releases the mature proteins. Required for the shutoff of minus-strand RNAs synthesis. Specifically inhibits the host IFN response by promoting the nuclear export of host STAT1. Also inhibits host transcription by inducing rapid proteasome-dependent degradation of POLR2A, a catalytic subunit of the RNAPII complex. The resulting inhibition of cellular protein synthesis serves to ensure maximal viral gene expression and to evade host immune response. Functionally, seems to be essential for minus-strand RNAs and subgenomic 26S mRNAs synthesis. Displays mono-ADP-ribosylhydrolase activity. ADP-ribosylation is a post-translantional modification that controls various processes of the host cell and the virus probably needs to revert it for optimal viral replication. Binds proteins of G3BP family and sequesters them into the viral RNA replication complexes thereby inhibiting the formation of host stress granules on viral mRNAs. The nsp3-G3BP complexes bind viral RNAs and probably orchestrate the assembly of viral replication complexes, thanks to the ability of G3BP family members to self-assemble and bind DNA. Its function is as follows. Seems to be essential for minus-strand RNAs and subgenomic 26S mRNAs synthesis. Displays mono-ADP-ribosylhydrolase activity. ADP-ribosylation is a post-translational modification that controls various processes of the host cell and the virus probably needs to revert it for optimal viral replication. Binds proteins of G3BP family and sequesters them into the viral RNA replication complexes thereby inhibiting the formation of host stress granules on viral mRNAs. The nsp3'-G3BP complexes bind viral RNAs and probably orchestrate the assembly of viral replication complexes, thanks to the ability of G3BP family members to self-assemble and bind DNA. In terms of biological role, RNA dependent RNA polymerase. Replicates genomic and antigenomic RNA by recognizing replications specific signals. The early replication complex formed by the polyprotein P123 and nsP4 synthesizes minus-strand RNAs. The late replication complex composed of fully processed nsP1-nsP4 is responsible for the production of genomic and subgenomic plus-strand RNAs. The core catalytic domain of nsP4 also possesses terminal adenylyltransferase (TATase) activity that is probably involved in maintenance and repair of the poly(A) tail, an element required for replication of the viral genome. The sequence is that of Polyprotein P1234 from Acrocephalus scirpaceus (Eurasian reed-warbler).